The following is a 221-amino-acid chain: Large ribosomal subunit protein uL4 (221 aa).

The tract at residues 45–100 (ARQGTHKTKNRGEVSGAGRKPFKQKGTGRARQGSIRAPQMTGGGIVHGPTPRDYSQ) is disordered.

This sequence belongs to the universal ribosomal protein uL4 family. Part of the 50S ribosomal subunit.

Its function is as follows. One of the primary rRNA binding proteins, this protein initially binds near the 5'-end of the 23S rRNA. It is important during the early stages of 50S assembly. It makes multiple contacts with different domains of the 23S rRNA in the assembled 50S subunit and ribosome. Forms part of the polypeptide exit tunnel. The chain is Large ribosomal subunit protein uL4 from Leifsonia xyli subsp. xyli (strain CTCB07).